The chain runs to 679 residues: NADPH--cytochrome P450 reductase (679 aa).

Residues 1 to 21 (MADSHGDTGATMPEAAAQEAS) are Lumenal-facing. Residues 22-42 (VFSMTDVVLFSLIVGLITYWF) form a helical membrane-spanning segment. At 43–679 (LFRKKKEEVP…KGRYSLDVWS (637 aa)) the chain is on the cytoplasmic side. The residue at position 64 (Ser64) is a Phosphoserine. The Flavodoxin-like domain maps to 81-225 (IVVFYGSQTG…DFITWREQFW (145 aa)). Residues 87 to 92 (SQTGTA), 139 to 142 (ATYG), 174 to 183 (LGNKTYEHFN), and Asp209 contribute to the FMN site. An FAD-binding FR-type domain is found at 280–522 (KNPFLATVTT…FVRKSQFRLP (243 aa)). Residue Arg299 participates in NADP(+) binding. FAD-binding positions include Arg425, 455–458 (RYYS), 473–475 (CAV), Tyr479, and 489–492 (GVAT). NADP(+) contacts are provided by residues Thr536, 597 to 598 (SR), 603 to 607 (KVYVQ), and Asp640. Position 678 (Trp678) interacts with FAD.

Belongs to the NADPH--cytochrome P450 reductase family. The protein in the N-terminal section; belongs to the flavodoxin family. It in the C-terminal section; belongs to the flavoprotein pyridine nucleotide cytochrome reductase family. FAD is required as a cofactor. FMN serves as cofactor.

The protein resides in the endoplasmic reticulum membrane. The enzyme catalyses 2 oxidized [cytochrome P450] + NADPH = 2 reduced [cytochrome P450] + NADP(+) + H(+). This enzyme is required for electron transfer from NADP to cytochrome P450 in microsomes. It can also provide electron transfer to heme oxygenase and cytochrome B5. This chain is NADPH--cytochrome P450 reductase, found in Oryctolagus cuniculus (Rabbit).